We begin with the raw amino-acid sequence, 451 residues long: Tubulin alpha chain (451 aa).

Gln-11 is a binding site for GTP. Position 40 is an N6-acetyllysine (Lys-40). 6 residues coordinate GTP: Glu-71, Gly-144, Thr-145, Thr-179, Asn-206, and Asn-228. Mg(2+) is bound at residue Glu-71. Glu-254 is a catalytic residue. The segment at 432–451 (YEEVGAESAEGDDEDEGEDY) is disordered.

The protein belongs to the tubulin family. Dimer of alpha and beta chains. A typical microtubule is a hollow water-filled tube with an outer diameter of 25 nm and an inner diameter of 15 nM. Alpha-beta heterodimers associate head-to-tail to form protofilaments running lengthwise along the microtubule wall with the beta-tubulin subunit facing the microtubule plus end conferring a structural polarity. Microtubules usually have 13 protofilaments but different protofilament numbers can be found in some organisms and specialized cells. It depends on Mg(2+) as a cofactor. In terms of processing, undergoes a tyrosination/detyrosination cycle, the cyclic removal and re-addition of a C-terminal tyrosine residue by the enzymes tubulin tyrosine carboxypeptidase (TTCP) and tubulin tyrosine ligase (TTL), respectively. Acetylation of alpha chains at Lys-40 stabilizes microtubules and affects affinity and processivity of microtubule motors. This modification has a role in multiple cellular functions, ranging from cell motility, cell cycle progression or cell differentiation to intracellular trafficking and signaling.

It localises to the cytoplasm. The protein resides in the cytoskeleton. It catalyses the reaction GTP + H2O = GDP + phosphate + H(+). Its function is as follows. Tubulin is the major constituent of microtubules, a cylinder consisting of laterally associated linear protofilaments composed of alpha- and beta-tubulin heterodimers. Microtubules grow by the addition of GTP-tubulin dimers to the microtubule end, where a stabilizing cap forms. Below the cap, tubulin dimers are in GDP-bound state, owing to GTPase activity of alpha-tubulin. This Daucus carota (Wild carrot) protein is Tubulin alpha chain (TBA).